We begin with the raw amino-acid sequence, 86 residues long: High affinity immunoglobulin epsilon receptor subunit gamma (86 aa).

Residues 1-18 form the signal peptide; the sequence is MIPAVILFLLLLVEEAAA. The Extracellular portion of the chain corresponds to 19–23; sequence LGEPQ. The helical transmembrane segment at 24–44 threads the bilayer; sequence LCYILDAILFLYGIVLTLLYC. Residues 45–86 are Cytoplasmic-facing; it reads RLKIQVRKADIASREKSDAVYTGLNTRNQETYETLKHEKPPQ. The region spanning 54–82 is the ITAM domain; it reads DIASREKSDAVYTGLNTRNQETYETLKHE. Residues Y65 and Y76 each carry the phosphotyrosine modification. T78 carries the phosphothreonine modification.

Belongs to the CD3Z/FCER1G family. In terms of assembly, igE Fc receptor is a tetramer of an alpha chain, a beta chain, and two disulfide linked gamma chains. Associates with FCGR1A to form a functional receptor complex. The signaling subunit of immunoglobulin gamma (IgG) Fc receptor complex. As a homodimer or a heterodimer of CD247 and FCER1G, associates with the ligand binding subunit FCGR3A to form a functional receptor complex. Associates with CLEC6A. Interacts with CLEC4E. Interacts (via ITAM domain) with SYK (via SH2 domains); activates SYK, enabling integrin-mediated activation of neutrophils and macrophages. Interacts with common beta chain of interleukin 3 receptor CSF2RB and recruits SYK in response to IL3 stimulation; this interaction is direct. Interacts with CD300LH; the interaction may be indirect. Interacts with CD300LD. Interacts with TARM1. As to expression, expressed in leukocytes and pinealocytes. Expression in the pineal gland does not undergo circadian variations.

The protein localises to the cell membrane. Functionally, adapter protein containing an immunoreceptor tyrosine-based activation motif (ITAM) that transduces activation signals from various immunoreceptors. As a component of the high-affinity immunoglobulin E (IgE) receptor, mediates allergic inflammatory signaling in mast cells. As a constitutive component of interleukin-3 receptor complex, selectively mediates interleukin 4/IL4 production by basophils priming T-cells toward effector T-helper 2 subset. Associates with pattern recognition receptors CLEC4D and CLEC4E to form a functional signaling complex in myeloid cells. Binding of mycobacterial trehalose 6,6'-dimycolate (TDM) to this receptor complex leads to phosphorylation of ITAM, triggering activation of SYK, CARD9 and NF-kappa-B, consequently driving maturation of antigen-presenting cells and shaping antigen-specific priming of T-cells toward effector T-helper 1 and T-helper 17 cell subtypes. May function cooperatively with other activating receptors. Functionally linked to integrin beta-2/ITGB2-mediated neutrophil activation. Also involved in integrin alpha-2/ITGA2-mediated platelet activation. In Rattus norvegicus (Rat), this protein is High affinity immunoglobulin epsilon receptor subunit gamma (Fcer1g).